A 584-amino-acid chain; its full sequence is MPIRILPSDLSSQISAGEIIERPASVVKEIIENSIDAGSKNINIIVENSGFQSIILKDDGCGIDKKDLLLAVCHHATSKINSLSDLDKLTTFGFRGEALASIRAVSRLTLISCTRFNDVAAKIYLEGFCSKNIILQPIAHPEGTTIIVDNLFYNIPVRLKFLKNKKLEFSKICEVVKKIALSHFYINFSLKHNNKLITQYNSINNRKNKINRLKDIFDTLDTSEFLEIKEKKYRMVLFGWISHPYNFKKIKNIQYCYVNNRYLYNNIFVNAVRAAYSKIEQKKNISFVLYLTIESFNIDINIHPTKNEIKFHNPDVVYTFIYEAVFSYLKKIKEKYYFNFSCKKQTQLNKEKEFYFYDSDPTFLTLISSIFFKKKQIFKNIKNKIKHNNFISKSTPLEKYESSIGRLLIIIHKYYGLIYHDNNFLLLSFPVAKGIVRKQKLKNNIQKENIIEYFLSNIKINLTSQEYLILFNKKEILSKFGFHLIFKKKYVILSSIPAFLKKCNFHIIISNFFAFLFLKKQVFISDIVDWFYINVFIELKNWTYIRGIEVLLEIEYYCPLLLINPPSKLLQKININAALCILKI.

This sequence belongs to the DNA mismatch repair MutL/HexB family.

This protein is involved in the repair of mismatches in DNA. It is required for dam-dependent methyl-directed DNA mismatch repair. May act as a 'molecular matchmaker', a protein that promotes the formation of a stable complex between two or more DNA-binding proteins in an ATP-dependent manner without itself being part of a final effector complex. The sequence is that of DNA mismatch repair protein MutL from Buchnera aphidicola subsp. Acyrthosiphon pisum (strain 5A).